The chain runs to 435 residues: Methylenetetrahydrofolate--tRNA-(uracil-5-)-methyltransferase TrmFO (435 aa).

10–15 (GAGLAG) is an FAD binding site.

Belongs to the MnmG family. TrmFO subfamily. It depends on FAD as a cofactor.

It localises to the cytoplasm. The catalysed reaction is uridine(54) in tRNA + (6R)-5,10-methylene-5,6,7,8-tetrahydrofolate + NADH + H(+) = 5-methyluridine(54) in tRNA + (6S)-5,6,7,8-tetrahydrofolate + NAD(+). It catalyses the reaction uridine(54) in tRNA + (6R)-5,10-methylene-5,6,7,8-tetrahydrofolate + NADPH + H(+) = 5-methyluridine(54) in tRNA + (6S)-5,6,7,8-tetrahydrofolate + NADP(+). Its function is as follows. Catalyzes the folate-dependent formation of 5-methyl-uridine at position 54 (M-5-U54) in all tRNAs. The sequence is that of Methylenetetrahydrofolate--tRNA-(uracil-5-)-methyltransferase TrmFO from Bacillus velezensis (strain DSM 23117 / BGSC 10A6 / LMG 26770 / FZB42) (Bacillus amyloliquefaciens subsp. plantarum).